A 343-amino-acid polypeptide reads, in one-letter code: S-adenosylmethionine:tRNA ribosyltransferase-isomerase (343 aa).

The protein belongs to the QueA family. As to quaternary structure, monomer.

It localises to the cytoplasm. It carries out the reaction 7-aminomethyl-7-carbaguanosine(34) in tRNA + S-adenosyl-L-methionine = epoxyqueuosine(34) in tRNA + adenine + L-methionine + 2 H(+). Its pathway is tRNA modification; tRNA-queuosine biosynthesis. In terms of biological role, transfers and isomerizes the ribose moiety from AdoMet to the 7-aminomethyl group of 7-deazaguanine (preQ1-tRNA) to give epoxyqueuosine (oQ-tRNA). The protein is S-adenosylmethionine:tRNA ribosyltransferase-isomerase of Pseudoalteromonas translucida (strain TAC 125).